Here is a 188-residue protein sequence, read N- to C-terminus: Large ribosomal subunit protein uL10 (188 aa).

Belongs to the universal ribosomal protein uL10 family. Part of the ribosomal stalk of the 50S ribosomal subunit. The N-terminus interacts with L11 and the large rRNA to form the base of the stalk. The C-terminus forms an elongated spine to which L12 dimers bind in a sequential fashion forming a multimeric L10(L12)X complex.

Forms part of the ribosomal stalk, playing a central role in the interaction of the ribosome with GTP-bound translation factors. This is Large ribosomal subunit protein uL10 from Crocosphaera subtropica (strain ATCC 51142 / BH68) (Cyanothece sp. (strain ATCC 51142)).